The chain runs to 506 residues: 2-isopropylmalate synthase (506 aa).

In terms of domain architecture, Pyruvate carboxyltransferase spans 8–272 (LIVFDTTLRD…ETGIQLKEIL (265 aa)). Mn(2+)-binding residues include aspartate 17, histidine 206, histidine 208, and asparagine 242. Residues 396-506 (ELEYVAVTVC…YLNAVNKALL (111 aa)) are regulatory domain.

The protein belongs to the alpha-IPM synthase/homocitrate synthase family. LeuA type 1 subfamily. In terms of assembly, homodimer. It depends on Mn(2+) as a cofactor.

It is found in the cytoplasm. The catalysed reaction is 3-methyl-2-oxobutanoate + acetyl-CoA + H2O = (2S)-2-isopropylmalate + CoA + H(+). It functions in the pathway amino-acid biosynthesis; L-leucine biosynthesis; L-leucine from 3-methyl-2-oxobutanoate: step 1/4. In terms of biological role, catalyzes the condensation of the acetyl group of acetyl-CoA with 3-methyl-2-oxobutanoate (2-ketoisovalerate) to form 3-carboxy-3-hydroxy-4-methylpentanoate (2-isopropylmalate). The polypeptide is 2-isopropylmalate synthase (Methylacidiphilum infernorum (isolate V4) (Methylokorus infernorum (strain V4))).